We begin with the raw amino-acid sequence, 2483 residues long: MRAVQLGPVPSGPRVALLPPLLLLLLLAAAGSAQAQAVDLDALCSYTWEAVDSKNNAVYKINVCGNVGISSCGPTSAICMCDLKTENCRSVGDSLLRSSARSLLEFNTTMGCQPSDSQHRIQTSITFLCGKTLGTPEFVTATDCVHYFEWRTTAACKKDIFKADKEVPCYAFDDKLQKHDLNPLIKLNGGYLVDDSDPDTSLFINVCRDIDSLRDPSTQLRVCPAGTAACLLKGNQAFDVGRPKEGLKLLSKDRLVLTYVKEEGEKPDFCNGHSPAVTVTFVCPSERREGTIPKLTAKSNCRYEVEWITEYACHRDYLQSESCSLSSEQHDITIDLSPLAQYGGSPYVSDGREYTFFINVCGDTKVSLCNNKEAAVCQEKKADSTQVKIAGRHQNQTLRYSDGDLTLIYSGGDECSSGFQRMSVINFECNKTAGKDGRGEPVFTGEVDCTYFFTWDTKYACIKEKEDLLCGAINGKKRYDLSVLARHSESEQNWEAVDGSQAESEKYFFINVCHRVLQEGKARNCPEDAAVCAVDKNGSKNLGKFVSSPTKEKGHIQLSYTDGDDCGSDKKISTNITLVCKPGDLESAPVLRAARSDGCFYEFEWHTAAACVLSKTEGENCTVLDAQAGFSFDLSLLTKKNGAYKVETEKYDFYINVCGPVSMDPCQSNSGACQVAKSGKSWNLGLSSTKLTYYDGMIQLSYRNGTPYNNEKHTPRATLITFLCDRDAGVGFPEYQEEDNSTYNFRWYTSYACPEEPLECMVTDPSMMEQYDLSSLVKSEGGSGGNWYAMENSREHVTRRKYYLNVCRPLNPVPGCDRYASACQMKYENHEGSLAETVSISNLGVAKIGPVVEESGSLLLEYVNGSACTTSDGQLTTYSTRIHLVCGRGFMNSHPIFTFNWECVVSFLWNTEAACPIQTITETDQACSIRDPSSGFVFNLSPLNDSAQGHVVLGIGKTFVFNICGAMPACGTVAGKPAYGCEAETQIEDIKDLRPQRPVGMERSLQLSAEGFLTLTYKGSSPSDRGTAFIIRFICNDDIYPGAPKFLHQDIDSTRGIRNTYFEFETALACTPSLVDCQVTDPAGNEYDLSALSMVRKPWTAVDTSAYGKRRHFYLSVCNPLPYIPGCHGIALGSCMVSEDNSFNLGVVQISPQATGNGSLSILYVNGDRCGDQRFSTRIVFECAQTSGSPMFQFVNNCEYVFVWRTVEACPVIREEGDNCQVKDPRHGNLYDLKPLGLNDTIVSVGEYTYYLRVCGKLSSDVCSAHDGSKAVSSCQEKKGPQGFQKVAGLLSQKLTFENGLLKMNYTGGDTCHKVYQRSTTIYFYCDRTTQKPVFLKETSDCSYMFEWRTQYACPPFNVTECSVQDAAGNSIDLSSLSRYSDNWEAVTRTGATEHYLINVCKSLSPHAGTEPCPPEAAVCLLNGSKPVNLGKVRDGPQWTDGVTVLQYVDGDLCPDKIRRRSTIIRFTCSDNQVNSRPLFISAVQDCEYTFSWPTPSACPVKSNTHDDCQVTNPSTGHLFDLSSLSGRAGINASYSEKGLVFMSICEENENCGPGVGACFGQTRISVGKASKRLSYKDQVLQLVYENGSPCPSLSDLRYKSVISFVCRPEAGPTNRPMLISLDKQTCTLFFSWHTPLACEQATECTVRNGSSIIDLSPLIHRTGGYEAYDESEDDTSDTTPDFYINICQPLNPMHGVPCPAGASVCKVPVDGPPIDIGRVTGPPIFNPVANEVYLNFESSTHCLADRYMNYTSLITFHCKRGVSMGTPKLIRTNDCDFVFEWETPIVCPDEVKTQGCAVTDEQLLYSFNLTSLSTSTFKVTRDARTYSIGVCTAAAGLGQEGCKDGGVCLLSGNKGASFGRLASMQLDYRHQDEAVILSYVNGDPCPPETDDGEPCVFPFIYKGKSYDECVLEGRAKLWCSKTANYDRDHEWGFCRQTNSYRMSAIIFTCDESEDIGRPQVFSEDRGCEVTFEWKTKVVCPPKKMECKFVQKHKTYDLRLLSSLTGSWDFVHEGNSYFINLCQRVYKGPLDCSERASICKKSATGQVQVLGLVHTQKLEVIDETVIVTYSKGYPCGGNKTASSVIELTCAKTVGRPAFKRFDSVSCTYYFYWYSRAACAVRPQEVTMVNGTLTNPVTGKSFSLGEIYFKLFSASGDMRTNGDNYLYEIQLSSITSSSYPACAGANICQVKPNDQHFSRKVGTSDMTKYYVQDGDLDVVFTSSSKCGKDKTKSVSSTIFFHCDPLVKDGIPEFSHETADCQYLFSWYTSAVCPLGVDFEDESAGPEYKGLSERSQAVGAVLSLLLVALTGCLLALLLHKKERRETVINKLTSCCRRSSGVSYKYSKVSKEEETDENETEWLMEEIQVPAPRLGKDGQENGHITTKAVKAEALSSLHGDDQDSEDEVLTVPEVKVHSGRGAEVESSQPLRNPQRKVLKEREGERLGLVRGEKARKGKFRPGQRKPTAPAKLVSFHDDSDEDLLHI.

The first 35 residues, Met1–Ala35, serve as a signal peptide directing secretion. Topologically, residues Gln36–Ala2295 are lumenal. 9 consecutive MRH domains span residues Ala42–Lys158, Val167–Arg315, Glu321–Lys463, Leu468–Leu613, Glu619–Glu755, Leu758–Ile917, Gln925–Pro1072, Val1075–Val1212, and Asp1218–Pro1356. Disulfide bonds link Cys44–Cys64 and Cys72–Cys79. An N-linked (GlcNAc...) asparagine glycan is attached at Asn107. 8 disulfides stabilise this stretch: Cys112–Cys144, Cys129–Cys156, Cys169–Cys207, Cys223–Cys230, Cys270–Cys301, Cys283–Cys313, Cys323–Cys361, and Cys369–Cys377. Asn395 and Asn430 each carry an N-linked (GlcNAc...) asparagine glycan. 4 cysteine pairs are disulfide-bonded: Cys415-Cys449, Cys429-Cys461, Cys470-Cys513, and Cys525-Cys532. Residues Asn537 and Asn575 are each glycosylated (N-linked (GlcNAc...) asparagine). 2 cysteine pairs are disulfide-bonded: Cys566/Cys599 and Cys580/Cys611. Residue Asn620 is glycosylated (N-linked (GlcNAc...) asparagine). 5 disulfides stabilise this stretch: Cys621–Cys658, Cys666–Cys673, Cys724–Cys753, Cys760–Cys807, and Cys816–Cys823. Asn740 is a glycosylation site (N-linked (GlcNAc...) asparagine). Asn864 is a glycosylation site (N-linked (GlcNAc...) asparagine). Intrachain disulfides connect Cys868-Cys903, Cys886-Cys915, Cys927-Cys964, Cys970-Cys981, Cys1035-Cys1070, Cys1077-Cys1118, and Cys1127-Cys1135. Asn944 carries an N-linked (GlcNAc...) asparagine glycan. The N-linked (GlcNAc...) asparagine glycan is linked to Asn1157. 4 disulfide bridges follow: Cys1170/Cys1198, Cys1183/Cys1210, Cys1220/Cys1255, and Cys1263/Cys1275. Asn1239 carries N-linked (GlcNAc...) asparagine glycosylation. An N-linked (GlcNAc...) asparagine glycan is attached at Asn1305. 2 disulfide bridges follow: Cys1312-Cys1342 and Cys1326-Cys1354. Asn1358 carries an N-linked (GlcNAc...) asparagine glycan. MRH domains are found at residues Thr1360–Val1501, Asp1507–Gln1641, Thr1643–Asp1790, Gln1795–Pro1982, Met1985–Val2120, and Val2128–Leu2273. 2 cysteine pairs are disulfide-bonded: Cys1362/Cys1401 and Cys1413/Cys1420. Asn1423 carries an N-linked (GlcNAc...) asparagine glycan. Intrachain disulfides connect Cys1454/Cys1487, Cys1469/Cys1499, Cys1509/Cys1546, Cys1552/Cys1559, Cys1591/Cys1627, Cys1607/Cys1639, Cys1645/Cys1688, Cys1699/Cys1706, Cys1743/Cys1776, Cys1759/Cys1788, Cys1797/Cys1832, Cys1843/Cys1849, Cys1886/Cys1968, Cys1896/Cys1920, Cys1910/Cys1935, Cys1950/Cys1980, Cys1987/Cys2022, Cys2032/Cys2039, Cys2075/Cys2106, and Cys2089/Cys2118. N-linked (GlcNAc...) asparagine glycosylation is present at Asn1532. N-linked (GlcNAc...) asparagine glycosylation is present at Asn1649. A glycan (N-linked (GlcNAc...) asparagine) is linked at Asn1750. N-linked (GlcNAc...) asparagine glycosylation is present at Asn1809. Positions Asp1891–Gln1937 constitute a Fibronectin type-II domain. N-linked (GlcNAc...) asparagine glycosylation is present at Asn2078. An N-linked (GlcNAc...) asparagine glycan is attached at Asn2129. Cystine bridges form between Cys2181–Cys2187, Cys2225–Cys2259, and Cys2241–Cys2271. Residues Val2296–Leu2316 form a helical membrane-spanning segment. The Cytoplasmic portion of the chain corresponds to His2317–Ile2483. Lys2342 carries the N6-acetyllysine modification. Ser2401 carries the post-translational modification Phosphoserine. The interval Ser2415–Ile2483 is disordered. An Omega-N-methylarginine modification is found at Arg2417. Composition is skewed to basic and acidic residues over residues Val2434 to Ala2451 and Ser2471 to Ile2483. A phosphoserine mark is found at Ser2471 and Ser2476.

The protein belongs to the MRL1/IGF2R family. Binds HA-I and HA-II plasma membrane adapters. Interacts with DPP4; the interaction is direct. Binds GGA1, GGA2 and GGA3. Interacts with the heterotrimeric retromer cargo-selective complex (CSC), formed by VPS26 (VPS26A or VPS26B), VPS29 and VPS35; which is involved in retrograde trafficking of the receptor from endosomes to the Golgi apparatus. Post-translationally, palmitoylated. Undergoes cysteine S-palmitoylation which promotes interaction with the retromer cargo-selective complex which mediates its retrograde trafficking to the Golgi apparatus.

It is found in the golgi apparatus membrane. Its subcellular location is the endosome membrane. Functionally, mediates the transport of phosphorylated lysosomal enzymes from the Golgi complex and the cell surface to lysosomes. Lysosomal enzymes bearing phosphomannosyl residues bind specifically to mannose-6-phosphate receptors in the Golgi apparatus and the resulting receptor-ligand complex is transported to an acidic prelysosomal compartment where the low pH mediates the dissociation of the complex. The receptor is then recycled back to the Golgi for another round of trafficking through its binding to the retromer. This receptor also binds IGF2. Acts as a positive regulator of T-cell coactivation by binding DPP4. This chain is Cation-independent mannose-6-phosphate receptor (Igf2r), found in Mus musculus (Mouse).